The chain runs to 356 residues: Nicotinate-nucleotide--dimethylbenzimidazole phosphoribosyltransferase (356 aa).

The active-site Proton acceptor is Glu-317.

It belongs to the CobT family. As to quaternary structure, homodimer.

It catalyses the reaction 5,6-dimethylbenzimidazole + nicotinate beta-D-ribonucleotide = alpha-ribazole 5'-phosphate + nicotinate + H(+). The protein operates within nucleoside biosynthesis; alpha-ribazole biosynthesis; alpha-ribazole from 5,6-dimethylbenzimidazole: step 1/2. In terms of biological role, catalyzes the synthesis of alpha-ribazole-5'-phosphate from nicotinate mononucleotide (NAMN) and 5,6-dimethylbenzimidazole (DMB). The polypeptide is Nicotinate-nucleotide--dimethylbenzimidazole phosphoribosyltransferase (Salmonella paratyphi A (strain ATCC 9150 / SARB42)).